We begin with the raw amino-acid sequence, 356 residues long: UDP-N-acetylglucosamine--N-acetylmuramyl-(pentapeptide) pyrophosphoryl-undecaprenol N-acetylglucosamine transferase (356 aa).

UDP-N-acetyl-alpha-D-glucosamine is bound by residues 14–16 (TGG), asparagine 126, arginine 162, serine 190, isoleucine 244, and glutamine 289.

The protein belongs to the glycosyltransferase 28 family. MurG subfamily.

It localises to the cell inner membrane. The catalysed reaction is di-trans,octa-cis-undecaprenyl diphospho-N-acetyl-alpha-D-muramoyl-L-alanyl-D-glutamyl-meso-2,6-diaminopimeloyl-D-alanyl-D-alanine + UDP-N-acetyl-alpha-D-glucosamine = di-trans,octa-cis-undecaprenyl diphospho-[N-acetyl-alpha-D-glucosaminyl-(1-&gt;4)]-N-acetyl-alpha-D-muramoyl-L-alanyl-D-glutamyl-meso-2,6-diaminopimeloyl-D-alanyl-D-alanine + UDP + H(+). The protein operates within cell wall biogenesis; peptidoglycan biosynthesis. In terms of biological role, cell wall formation. Catalyzes the transfer of a GlcNAc subunit on undecaprenyl-pyrophosphoryl-MurNAc-pentapeptide (lipid intermediate I) to form undecaprenyl-pyrophosphoryl-MurNAc-(pentapeptide)GlcNAc (lipid intermediate II). This Cupriavidus necator (strain ATCC 17699 / DSM 428 / KCTC 22496 / NCIMB 10442 / H16 / Stanier 337) (Ralstonia eutropha) protein is UDP-N-acetylglucosamine--N-acetylmuramyl-(pentapeptide) pyrophosphoryl-undecaprenol N-acetylglucosamine transferase.